The sequence spans 742 residues: ATP-dependent RNA helicase DBP7 (742 aa).

Positions 45–100 (GKTVSRKRKANTTGDEGIIPGRGENSIKKLHKESSYSSEEQEKYKGRNAHNTQGRT) are disordered. Positions 143 to 172 (DQFASLGVSSLLVSHLEQKMRIKKPTSIQK) match the Q motif motif. A Helicase ATP-binding domain is found at 178–372 (IIGNAGKNDF…NVALKDYKLI (195 aa)). 191 to 198 (AQTGSGKT) contacts ATP. The DEGD box signature appears at 307 to 310 (DEGD). The Helicase C-terminal domain occupies 405–605 (TLAATLNNIT…ILMPAFKDVN (201 aa)). A disordered region spans residues 701-726 (AMGLQSSKDGNSEKKPTKENSKNKMF). Residues 710-722 (GNSEKKPTKENSK) show a composition bias toward basic and acidic residues.

It belongs to the DEAD box helicase family. DDX31/DBP7 subfamily.

It localises to the nucleus. It is found in the nucleolus. The catalysed reaction is ATP + H2O = ADP + phosphate + H(+). Its function is as follows. ATP-binding RNA helicase involved in the biogenesis of 60S ribosomal subunits and is required for the normal formation of 25S and 5.8S rRNAs. The sequence is that of ATP-dependent RNA helicase DBP7 (DBP7) from Saccharomyces cerevisiae (strain ATCC 204508 / S288c) (Baker's yeast).